The chain runs to 383 residues: Deoxyguanosinetriphosphate triphosphohydrolase-like protein (383 aa).

In terms of domain architecture, HD spans 62–198 (RLTHSLEVST…ASLADDISYI (137 aa)).

Belongs to the dGTPase family. Type 2 subfamily.

The protein is Deoxyguanosinetriphosphate triphosphohydrolase-like protein of Rickettsia prowazekii (strain Madrid E).